Here is a 302-residue protein sequence, read N- to C-terminus: MIERSHHELRKAFGDLLQGHVCKFAASVFDPISVRMASDLGFEVGIQGGSVASLQVLGAPDIALLTLDEYVEQVTRVGRASQIPVIADADHGFGNALNVMRTVSELQKAGVAALTLEDTHLPARYEEQSPVLIGEEEAAAKIYAARFSRSDDSLSIIARTNVAATTLEDSIARTAAYEKAGADAICLVGVKDFHHLAALTEHLTTPIMLINYGNPALCDVEKLSAANVRIVVNGHAPYFSAIKSIYQALREQSGSQGPELSLPELISKYTRVESYREWTKTYLKVGHDSPCGVTPRGPQLCN.

Serine 50 serves as a coordination point for substrate. Aspartate 88 provides a ligand contact to Mg(2+). Residues arginine 159 and histidine 235 each contribute to the substrate site.

This sequence belongs to the isocitrate lyase/PEP mutase superfamily. Oxaloacetate decarboxylase family. As to quaternary structure, homotetramer; dimer of dimers. Requires Mg(2+) as cofactor.

The catalysed reaction is oxaloacetate + H(+) = pyruvate + CO2. Its function is as follows. Catalyzes the decarboxylation of oxaloacetate into pyruvate. Seems to play a role in maintaining cellular concentrations of bicarbonate and pyruvate. The sequence is that of Oxaloacetate decarboxylase 2 from Pseudomonas putida (strain W619).